The chain runs to 736 residues: Catalase-peroxidase (736 aa).

A signal peptide spans 1-21 (MFKKTILSFVISAVMVTAASA). The segment at residues 102 to 224 (WHAAGTYRTH…LAAVEMGLIY (123 aa)) is a cross-link (tryptophyl-tyrosyl-methioninium (Trp-Tyr) (with M-250)). His103 functions as the Proton acceptor in the catalytic mechanism. A cross-link (tryptophyl-tyrosyl-methioninium (Tyr-Met) (with W-102)) is located at residues 224–250 (YVNPVGPHGNPDPLLAANDIRMSFGRM). His265 lines the heme b pocket.

This sequence belongs to the peroxidase family. Peroxidase/catalase subfamily. Homodimer or homotetramer. Heme b is required as a cofactor. Post-translationally, formation of the three residue Trp-Tyr-Met cross-link is important for the catalase, but not the peroxidase activity of the enzyme.

It carries out the reaction H2O2 + AH2 = A + 2 H2O. The enzyme catalyses 2 H2O2 = O2 + 2 H2O. In terms of biological role, bifunctional enzyme with both catalase and broad-spectrum peroxidase activity. This Shewanella woodyi (strain ATCC 51908 / MS32) protein is Catalase-peroxidase.